The chain runs to 106 residues: YcgL domain-containing protein PsycPRwf_1721 (106 aa).

The YcgL domain maps to 1 to 94 (MHCDIYKFPK…PSDVLLAQAQ (94 aa)).

The chain is YcgL domain-containing protein PsycPRwf_1721 from Psychrobacter sp. (strain PRwf-1).